Here is a 163-residue protein sequence, read N- to C-terminus: Transcriptional repressor NrdR (163 aa).

Residues cysteine 3–cysteine 34 fold into a zinc finger. The ATP-cone domain occupies tyrosine 49 to glutamate 139.

Belongs to the NrdR family. Requires Zn(2+) as cofactor.

In terms of biological role, negatively regulates transcription of bacterial ribonucleotide reductase nrd genes and operons by binding to NrdR-boxes. This chain is Transcriptional repressor NrdR, found in Koribacter versatilis (strain Ellin345).